A 699-amino-acid chain; its full sequence is Elongation factor G (699 aa).

The tr-type G domain maps to 8–283 (EHIRNIGICA…AVVDFLPSPI (276 aa)). GTP contacts are provided by residues 17-24 (AHIDAGKT), 81-85 (DTPGH), and 135-138 (NKMD).

This sequence belongs to the TRAFAC class translation factor GTPase superfamily. Classic translation factor GTPase family. EF-G/EF-2 subfamily.

It is found in the cytoplasm. Its function is as follows. Catalyzes the GTP-dependent ribosomal translocation step during translation elongation. During this step, the ribosome changes from the pre-translocational (PRE) to the post-translocational (POST) state as the newly formed A-site-bound peptidyl-tRNA and P-site-bound deacylated tRNA move to the P and E sites, respectively. Catalyzes the coordinated movement of the two tRNA molecules, the mRNA and conformational changes in the ribosome. This Rickettsia peacockii (strain Rustic) protein is Elongation factor G.